The primary structure comprises 169 residues: Cell division inhibitor SulA (169 aa).

Residues 1 to 13 (MFTSAHANRSAQA) are compositionally biased toward polar residues. The tract at residues 1–26 (MFTSAHANRSAQASAPAGHYAHRSGE) is disordered. The segment at 106–112 (ALRTGNY) is ftsZ binding. The segment at 162–169 (KIHSNLYH) is lon protease binding.

Belongs to the SulA family. Interacts with FtsZ. In terms of processing, is rapidly cleaved and degraded by the Lon protease once DNA damage is repaired.

Its function is as follows. Component of the SOS system and an inhibitor of cell division. Accumulation of SulA causes rapid cessation of cell division and the appearance of long, non-septate filaments. In the presence of GTP, binds a polymerization-competent form of FtsZ in a 1:1 ratio, thus inhibiting FtsZ polymerization and therefore preventing it from participating in the assembly of the Z ring. This mechanism prevents the premature segregation of damaged DNA to daughter cells during cell division. The chain is Cell division inhibitor SulA from Klebsiella pneumoniae subsp. pneumoniae (strain ATCC 700721 / MGH 78578).